A 706-amino-acid chain; its full sequence is Integrator complex subunit 13 (706 aa).

The disordered stretch occupies residues proline 564–leucine 603. A coiled-coil region spans residues glutamate 567–aspartate 622. The Nuclear localization signal (NLS) motif lies at lysine 572–aspartate 582. Lysine 611 is covalently cross-linked (Glycyl lysine isopeptide (Lys-Gly) (interchain with G-Cter in SUMO2)). The segment covering alanine 615–valine 636 has biased composition (basic and acidic residues). Positions alanine 615–proline 650 are disordered. Phosphoserine occurs at positions 623, 626, and 678. The cleavage module binding motif (CMBM) stretch occupies residues glycine 649–glycine 694.

The protein belongs to the Integrator subunit 13 family. As to quaternary structure, component of the Integrator complex, composed of core subunits INTS1, INTS2, INTS3, INTS4, INTS5, INTS6, INTS7, INTS8, INTS9/RC74, INTS10, INTS11/CPSF3L, INTS12, INTS13, INTS14 and INTS15. The core complex associates with protein phosphatase 2A subunits PPP2CA and PPP2R1A, to form the Integrator-PP2A (INTAC) complex. INTS13 is part of the tail subcomplex, composed of INTS10, INTS13, INTS14 and INTS15. Interacts with transcription factors ZNF609 and ZNF655. Interacts with PAFAH1B1; this interaction may be required for proper recruitment of dynein complexes to the nuclear envelope at prophase. As to expression, widely expressed. Tends to be up-regulated in seminomas compared to normal testis.

It is found in the nucleus. The protein localises to the cytoplasm. Its function is as follows. Component of the integrator complex, a multiprotein complex that terminates RNA polymerase II (Pol II) transcription in the promoter-proximal region of genes. The integrator complex provides a quality checkpoint during transcription elongation by driving premature transcription termination of transcripts that are unfavorably configured for transcriptional elongation: the complex terminates transcription by (1) catalyzing dephosphorylation of the C-terminal domain (CTD) of Pol II subunit POLR2A/RPB1 and SUPT5H/SPT5, (2) degrading the exiting nascent RNA transcript via endonuclease activity and (3) promoting the release of Pol II from bound DNA. The integrator complex is also involved in terminating the synthesis of non-coding Pol II transcripts, such as enhancer RNAs (eRNAs), small nuclear RNAs (snRNAs), telomerase RNAs and long non-coding RNAs (lncRNAs). Within the integrator complex, INTS13 is part of the integrator tail module and acts as a platform for the recruitment of transcription factors at promoters. At prophase, mediates recruitment of cytoplasmic dynein to the nuclear envelope, a step important for proper centrosome-nucleus coupling. At G2/M phase, may be required for proper spindle formation and execution of cytokinesis. This Homo sapiens (Human) protein is Integrator complex subunit 13.